A 136-amino-acid polypeptide reads, in one-letter code: uncharacterized protein (136 aa).

This is an uncharacterized protein from Acheta domesticus (House cricket).